The primary structure comprises 395 residues: Cytoplasmic tRNA 2-thiolation protein 1 (395 aa).

Basic residues predominate over residues 297 to 309 (TVAYKNKNKNKKK). A disordered region spans residues 297–335 (TVAYKNKNKNKKKSNSEQEEQEKQEQEVNPDGSISLNRN).

This sequence belongs to the TtcA family. CTU1/NCS6/ATPBD3 subfamily.

The protein localises to the cytoplasm. It participates in tRNA modification; 5-methoxycarbonylmethyl-2-thiouridine-tRNA biosynthesis. In terms of biological role, plays a central role in 2-thiolation of mcm(5)S(2)U at tRNA wobble positions of tRNA(Lys), tRNA(Glu) and tRNA(Gln). Directly binds tRNAs and probably acts by catalyzing adenylation of tRNAs, an intermediate required for 2-thiolation. It is unclear whether it acts as a sulfurtransferase that transfers sulfur from thiocarboxylated URM1 onto the uridine of tRNAs at wobble position. Prior mcm(5) tRNA modification by the elongator complex is required for 2-thiolation. May also be involved in protein urmylation. The polypeptide is Cytoplasmic tRNA 2-thiolation protein 1 (Candida albicans (strain SC5314 / ATCC MYA-2876) (Yeast)).